The chain runs to 366 residues: Lysophosphatidic acid receptor 1-B (366 aa).

Over 1 to 52 (MTSLSEFVSEPIGMMSQTSAASESQCYYNETIAFFYNRSGKYLDTEWNAVSK) the chain is Extracellular. Intrachain disulfides connect Cys26–Cys192 and Cys190–Cys197. 2 N-linked (GlcNAc...) asparagine glycosylation sites follow: Asn29 and Asn37. Lys41 provides a ligand contact to a 1-acyl-sn-glycero-3-phosphate. Residues 53–77 (LVMGLGITVCIFIMLANLLVMVAIY) traverse the membrane as a helical segment. Over 78–85 (VNRRFHFP) the chain is Cytoplasmic. The chain crosses the membrane as a helical span at residues 86–109 (IYYLMANLAAADFFAGLAYFYLMF). The Extracellular portion of the chain corresponds to 110-123 (NTGPNTRRLTVSTW). A helical membrane pass occupies residues 124-146 (LLRQGLIDTSLTASVANLLAIAI). Position 126–131 (126–131 (RQGLID)) interacts with a 1-acyl-sn-glycero-3-phosphate. At 147-165 (ERHITVFRMQLHTRMSNRR) the chain is on the cytoplasmic side. The helical transmembrane segment at 166-186 (VVVVIVVIWTVAIVMGAIPSV) threads the bilayer. Over 187–206 (GWNCICDLEHCSNMAPLYSD) the chain is Extracellular. The helical transmembrane segment at 207–227 (SYLIFWTIFNLVTFVVMVVLY) threads the bilayer. Residue Trp212 participates in a 1-acyl-sn-glycero-3-phosphate binding. The Cytoplasmic segment spans residues 228 to 257 (AHIFVYVRQRTMRMSRHSSGPRRNRDTMMS). The chain crosses the membrane as a helical span at residues 258–282 (LLKTVVIVLGAFIVCWTPGLVLLLL). Residues 283-296 (DVCCPQCNILAYEK) are Extracellular-facing. Cys286 and Cys289 form a disulfide bridge. Residues 297-317 (FFLLLAEFNSAMNPIIYSYRD) traverse the membrane as a helical segment. Residues 318–366 (KEMSATFKQILCCQRTENVNGPTEGSDRSASSLNHTILAGVHSNDHSVV) are Cytoplasmic-facing.

Belongs to the G-protein coupled receptor 1 family. As to expression, expressed at high levels in oocytes and at lower levels in brain and spinal cord. Below detection level in lung, heart, kidney, liver, muscle, stomach, and intestine.

The protein localises to the cell surface. The protein resides in the cell membrane. It is found in the endosome. Functionally, receptor for lysophosphatidic acid (LPA). Plays a role in the reorganization of the actin cytoskeleton, cell migration, differentiation and proliferation, and thereby contributes to the responses to tissue damage and infectious agents. Activates downstream signaling cascades via the G(i)/G(o), G(12)/G(13), and G(q) families of heteromeric G proteins. Signaling inhibits adenylyl cyclase activity and decreases cellular cAMP levels. Signaling triggers an increase of cytoplasmic Ca(2+) levels. Signaling leads to the activation of phospholipase C (PLC) and the formation of inositol 1,4,5-trisphosphate. Signaling mediates activation of down-stream MAP kinases. Contributes to the regulation of cell shape. Promotes Rho-dependent reorganization of the actin cytoskeleton in neuronal cells and neurite retraction. Promotes the activation of Rho and the formation of actin stress fibers. Promotes formation of lamellipodia at the leading edge of migrating cells via activation of Rac. Through its function as lysophosphatidic acid receptor, plays a role in chemotaxis and cell migration, including responses to injury and wounding. Promotes cell proliferation in response to lysophosphatidic acid. This Xenopus laevis (African clawed frog) protein is Lysophosphatidic acid receptor 1-B (lpar1-b).